A 920-amino-acid chain; its full sequence is Anoctamin-4 (920 aa).

Over 1 to 323 (METSSSGITN…LYFAWLGWYT (323 aa)) the chain is Cytoplasmic. The tract at residues 38–64 (KDDDSLLHPGNLTSTSDDASRLEAGGE) is disordered. Residues 324-344 (GMLFPAAFIGLFVFLYGVITL) form a helical membrane-spanning segment. The Extracellular segment spans residues 345–389 (DHCQVSKEVCQATDIIMCPVCDKYCPFMRLSDSCVYAKVTHLFDN). The helical transmembrane segment at 390–410 (GATVFFAVFMAVWATVFLEFW) threads the bilayer. The Cytoplasmic portion of the chain corresponds to 411–470 (KRRRAVIAYDWDLIDWEEEEEEIRPQFEAKYSKKERMNPISGKPEPYQAFADKCSRLIVS). Residues 471–491 (ASGIFFMICVVIAAVFGIVIY) traverse the membrane as a helical segment. At 492 to 512 (RVVTVSTFAAFKWALIRNNSQ) the chain is on the extracellular side. The N-linked (GlcNAc...) asparagine glycan is linked to Asn509. A helical membrane pass occupies residues 513–533 (VATTGTAVCINFCIIMLLNVL). The Cytoplasmic segment spans residues 534 to 560 (YEKVALLLTNLEQPRTESEWENSFTLK). Residues 561 to 581 (MFLFQFVNLNSSTFYIAFFLG) traverse the membrane as a helical segment. Residues 582-680 (RFTGHPGAYL…AYGLFDEYLE (99 aa)) are Extracellular-facing. Residues 681–701 (MILQFGFTTIFVAAFPLAPLL) traverse the membrane as a helical segment. Over 702 to 733 (ALLNNIIEIRLDAYKFVTQWRRPLASRAKDIG) the chain is Cytoplasmic. Residues 734–754 (IWYGILEGIGILSVITNAFVI) traverse the membrane as a helical segment. Over 755 to 850 (AITSDFIPRL…QFWHVLAARL (96 aa)) the chain is Extracellular. Residues Asn789 and Asn802 are each glycosylated (N-linked (GlcNAc...) asparagine). The chain crosses the membrane as a helical span at residues 851–871 (AFIIVFEHLVFCIKHLISYLI). The Cytoplasmic portion of the chain corresponds to 872-920 (PDLPKDLRDRMRREKYLIQEMMYEAELERLQKERKERKKNGKAHHNEWP).

Belongs to the anoctamin family.

It is found in the cell membrane. It catalyses the reaction a 1,2-diacyl-sn-glycero-3-phospho-L-serine(in) = a 1,2-diacyl-sn-glycero-3-phospho-L-serine(out). It carries out the reaction a beta-D-galactosyl-(1&lt;-&gt;1')-N-acylsphing-4-enine(out) = a beta-D-galactosyl-(1&lt;-&gt;1')-N-acylsphing-4-enine(in). The enzyme catalyses a 1,2-diacyl-sn-glycero-3-phosphocholine(in) = a 1,2-diacyl-sn-glycero-3-phosphocholine(out). Functionally, has calcium-dependent phospholipid scramblase activity; scrambles phosphatidylserine, phosphatidylcholine and galactosylceramide. Does not exhibit calcium-activated chloride channel (CaCC) activity. In Bos taurus (Bovine), this protein is Anoctamin-4.